The sequence spans 666 residues: Protein OS-9 (666 aa).

The signal sequence occupies residues 1–30 (MAAEALLSSLLGLLFLGLLLPAHLTGGVGS). The 123-residue stretch at 108-230 (APCLLKTKDW…SIRTSRLCPH (123 aa)) folds into the MRH domain. A disulfide bridge connects residues cysteine 110 and cysteine 123. The a mannooligosaccharide derivative site is built by tryptophan 117, tryptophan 118, and glutamine 130. N-linked (GlcNAc...) asparagine glycosylation is present at asparagine 177. Disulfide bonds link cysteine 181–cysteine 216 and cysteine 196–cysteine 228. Residues aspartate 182, arginine 188, glutamate 212, and tyrosine 218 each contribute to the a mannooligosaccharide derivative site. Disordered stretches follow at residues 261-356 (RQAE…NVQV), 370-449 (EELK…SDRE), 505-540 (ESQS…EHRV), and 631-666 (EANK…EFDF). Composition is skewed to basic and acidic residues over residues 263–281 (AESK…DTDH) and 294–310 (PKKE…ESEF). Residues 320 to 332 (QATGTEEAQAGEQ) are compositionally biased toward low complexity. 2 stretches are compositionally biased toward basic and acidic residues: residues 370 to 379 (EELKGAEKGK) and 395 to 412 (PQRE…RGLV). Over residues 413–429 (EEEDGDEEEEDEDEDEQ) the composition is skewed to acidic residues. Residues 434-449 (EFEKELEGMLLPSDRE) show a composition bias toward basic and acidic residues. Residues 631–646 (EANKERQRQSELESNY) show a composition bias toward basic and acidic residues. Residues 657–666 (DTGDLDEFDF) are compositionally biased toward acidic residues.

The protein belongs to the OS-9 family. As to quaternary structure, component of the HRD1 complex, which comprises at least SYNV1/HRD1, DERL1/2, FAM8A1, HERPUD1/HERP, OS9, SEL1L and UBE2J1. FAM8A1 is stabilized by interaction with SYNV1, which prevents its proteasomal degradation. OS9 and UBE2J1 recruitment to the complex may be mediated by SEL1L. Through this complex, may interact with ERLEC1 and HSPA5. Interacts (via C-terminus) with CPNE6 (via second C2 domain); this interaction occurs in a calcium-dependent manner in vitro. Interacts with CREB3. Intramolecular disulfide bonds.

The protein localises to the endoplasmic reticulum lumen. Lectin component of the HRD1 complex, which functions in endoplasmic reticulum (ER) quality control and ER-associated degradation (ERAD). Specifically recognizes and binds improperly folded glycoproteins as well as hyperglycosylated proteins, retain them in the ER, and transfers them to the ubiquitination machinery and promote their degradation. Possible targets include TRPV4 as well as hyperglycosylated HSP90B1. This chain is Protein OS-9 (Os9), found in Rattus norvegicus (Rat).